Here is a 647-residue protein sequence, read N- to C-terminus: Phosphomethylpyrimidine synthase (647 aa).

Residues Asn235, Met264, Tyr293, His329, 349–351 (SRG), 390–393 (DGLR), and Glu429 each bind substrate. Position 433 (His433) interacts with Zn(2+). Tyr456 contacts substrate. Zn(2+) is bound at residue His497. 3 residues coordinate [4Fe-4S] cluster: Cys577, Cys580, and Cys585. The tract at residues 623–647 (KSAEFKASGSELYHPAVSHEEVAEG) is disordered.

This sequence belongs to the ThiC family. Homodimer. Requires [4Fe-4S] cluster as cofactor.

The enzyme catalyses 5-amino-1-(5-phospho-beta-D-ribosyl)imidazole + S-adenosyl-L-methionine = 4-amino-2-methyl-5-(phosphooxymethyl)pyrimidine + CO + 5'-deoxyadenosine + formate + L-methionine + 3 H(+). It participates in cofactor biosynthesis; thiamine diphosphate biosynthesis. Functionally, catalyzes the synthesis of the hydroxymethylpyrimidine phosphate (HMP-P) moiety of thiamine from aminoimidazole ribotide (AIR) in a radical S-adenosyl-L-methionine (SAM)-dependent reaction. This chain is Phosphomethylpyrimidine synthase, found in Vibrio vulnificus (strain CMCP6).